We begin with the raw amino-acid sequence, 326 residues long: Polycomb complex protein BMI-1 (326 aa).

An RING-type zinc finger spans residues 18-57 (CVLCGGYFIDATTIIECLHSFCKTCIVRYLETSKYCPICD). Positions 81–95 (KLVPGLFKNEMKRRR) match the Nuclear localization signal motif. Positions 162–182 (RYLRCPAAMTVMHLRKFLRSK) are interaction with PHC2. Residues 164–228 (LRCPAAMTVM…GPLPLKYRVR (65 aa)) form an interaction with E4F1 region. Residues 236–326 (IGHQREGLSN…INGSSATSSG (91 aa)) are disordered. Positions 265 to 278 (LPSTSSCLPSPSTP) are enriched in low complexity. A compositionally biased stretch (polar residues) spans 279 to 310 (VQSPHPQFPHISSTMNGTSSSPGSNHQSSFTN). Over residues 315 to 326 (SSINGSSATSSG) the composition is skewed to low complexity.

As to quaternary structure, component of a PRC1-like complex.

Its subcellular location is the nucleus. It localises to the cytoplasm. Component of a Polycomb group (PcG) multiprotein PRC1-like complex, a complex class required to maintain the transcriptionally repressive state of many genes, including Hox genes, throughout development. PcG PRC1 complex acts via chromatin remodeling and modification of histones; it mediates monoubiquitination of histone H2A 'Lys-119', rendering chromatin heritably changed in its expressibility. In the PRC1-like complex, regulates the E3 ubiquitin-protein ligase activity of RNF2/RING2. The sequence is that of Polycomb complex protein BMI-1 (BMI1) from Gallus gallus (Chicken).